The chain runs to 102 residues: Small ribosomal subunit protein uS17 (102 aa).

Residues 1–15 (MTDETASQEASQSTD) show a composition bias toward polar residues. A disordered region spans residues 1–20 (MTDETASQEASQSTDAAAPA).

This sequence belongs to the universal ribosomal protein uS17 family. As to quaternary structure, part of the 30S ribosomal subunit.

Its function is as follows. One of the primary rRNA binding proteins, it binds specifically to the 5'-end of 16S ribosomal RNA. This Frankia casuarinae (strain DSM 45818 / CECT 9043 / HFP020203 / CcI3) protein is Small ribosomal subunit protein uS17.